Here is a 101-residue protein sequence, read N- to C-terminus: Early E3A 11.6 kDa glycoprotein (101 aa).

N14 carries N-linked (GlcNAc...) asparagine; by host glycosylation. Residues 41 to 62 (MWWFSIALMFVCLIIMWLICCL) traverse the membrane as a helical segment.

Belongs to the adenoviridae E3A-1 family. In terms of processing, N-glycosylated and probably also O-glycosylated.

It is found in the host nucleus membrane. This is Early E3A 11.6 kDa glycoprotein from Human adenovirus C serotype 6 (HAdV-6).